Consider the following 337-residue polypeptide: Peroxidase 14 (337 aa).

A signal peptide spans 1–22 (MARIGSFLILLSLTYALTLCIC). N24 is a glycosylation site (N-linked (GlcNAc...) asparagine). 4 disulfide bridges follow: C44–C124, C77–C82, C130–C331, and C209–C241. Residue H75 is the Proton acceptor of the active site. Ca(2+) is bound by residues D76, V79, G81, D83, and S85. A substrate-binding site is contributed by P172. An N-linked (GlcNAc...) asparagine glycan is attached at N191. Heme b is bound at residue H202. Ca(2+) is bound at residue T203. N-linked (GlcNAc...) asparagine glycosylation is found at N218 and N249. Residues D254, S257, and D262 each contribute to the Ca(2+) site.

Belongs to the peroxidase family. Classical plant (class III) peroxidase subfamily. Heme b is required as a cofactor. Ca(2+) serves as cofactor.

Its subcellular location is the secreted. It carries out the reaction 2 a phenolic donor + H2O2 = 2 a phenolic radical donor + 2 H2O. Functionally, removal of H(2)O(2), oxidation of toxic reductants, biosynthesis and degradation of lignin, suberization, auxin catabolism, response to environmental stresses such as wounding, pathogen attack and oxidative stress. These functions might be dependent on each isozyme/isoform in each plant tissue. The sequence is that of Peroxidase 14 (PER14) from Arabidopsis thaliana (Mouse-ear cress).